The sequence spans 297 residues: MAELTALESLIEMGFPRGRAEKALALTGNQGIEAAMDWLMEHEDDPDVDEPLETPLSHVLGREPTPSEQVGPEGSGSAAGESRPILTEEERQEQTKRMLELVAQKQREREEREEREALEREKQRRRQGQELSVARQKLQEDEMRRAAEERRREKAEELAARQRVREKIERDKAERAKKYGGSVGSRSSPPATDPGPVPSSPSQEPPTKREYDQCRIQVRLPDGTSLTQTFRAREQLAAVRLYVELHRGEEPGQDQDPVQLLSGFPRRAFSEADMERPLQELGLVPSAVLIVAKKCPS.

Alanine 2 is modified (N-acetylalanine). Positions 2–42 constitute a UBA domain; that stretch reads AELTALESLIEMGFPRGRAEKALALTGNQGIEAAMDWLMEH. The segment at 38–214 is disordered; the sequence is WLMEHEDDPD…PPTKREYDQC (177 aa). A compositionally biased stretch (acidic residues) spans 42–52; the sequence is HEDDPDVDEPL. An interaction with BRCA1 region spans residues 43 to 297; it reads EDDPDVDEPL…VLIVAKKCPS (255 aa). Composition is skewed to basic and acidic residues over residues 86-122 and 137-177; these read LTEE…EREK and KLQE…ERAK. At serine 199 the chain carries Phosphoserine. Phosphoserine; by MAPK12 is present on serine 200. A phosphothreonine mark is found at threonine 207 and threonine 229. In terms of domain architecture, UBX spans 209–291; sequence REYDQCRIQV…GLVPSAVLIV (83 aa). Serine 270 carries the phosphoserine modification.

In terms of assembly, interacts with MAVS; this interaction prevents MAVS oligomerization and thus disrupts the RLR signaling pathway. Interacts with CUL1; this interaction inhibits CUL1-mediated degradation of NF-kappa-B inhibitors. Interacts with BIRC2/c-IAP1; this interaction prevents TNFalpha-stimulated RIP1 ubiquitination and subsequent NF-kappa-B activation. Component of a complex required to couple retrotranslocation, ubiquitination and deglycosylation composed of NGLY1, SAKS1, AMFR, VCP and RAD23B. Interacts with HOMER2. Interacts directly with VCP. Interacts with BRCA1 and BARD1; interaction takes place when BRCA1 is not autoubiquitinated but is strongly enhanced in the presence of autoubiquitinated BRCA1.

The protein resides in the cytoplasm. Its function is as follows. Ubiquitin-binding protein that plays a role in the modulation of innate immune response. Blocks both the RIG-I-like receptors (RLR) and NF-kappa-B pathways. Following viral infection, UBXN1 is induced and recruited to the RLR component MAVS. In turn, interferes with MAVS oligomerization, and disrupts the MAVS/TRAF3/TRAF6 signalosome. This function probably serves as a brake to prevent excessive RLR signaling. Interferes with the TNFalpha-triggered NF-kappa-B pathway by interacting with cellular inhibitors of apoptosis proteins (cIAPs) and thereby inhibiting their recruitment to TNFR1. Also prevents the activation of NF-kappa-B by associating with CUL1 and thus inhibiting NF-kappa-B inhibitor alpha/NFKBIA degradation that remains bound to NF-kappa-B. Interacts with the BRCA1-BARD1 heterodimer and regulates its activity. Specifically binds 'Lys-6'-linked polyubiquitin chains. Interaction with autoubiquitinated BRCA1 leads to the inhibition of the E3 ubiquitin-protein ligase activity of the BRCA1-BARD1 heterodimer. Component of a complex required to couple deglycosylation and proteasome-mediated degradation of misfolded proteins in the endoplasmic reticulum that are retrotranslocated in the cytosol. The protein is UBX domain-containing protein 1 (Ubxn1) of Mus musculus (Mouse).